The primary structure comprises 124 residues: Transmembrane protein 254 (124 aa).

The next 3 helical transmembrane spans lie at 16-36, 62-82, and 96-116; these read LFWV…IFWP, VHAW…YAIV, and LLWF…LIAF.

The protein localises to the membrane. The sequence is that of Transmembrane protein 254 (TMEM254) from Bos taurus (Bovine).